Consider the following 170-residue polypeptide: Small ribosomal subunit protein uS5 (170 aa).

Positions 13–76 (LTEKLIGVNR…DQARRSMVKI (64 aa)) constitute an S5 DRBM domain.

Belongs to the universal ribosomal protein uS5 family. Part of the 30S ribosomal subunit. Contacts proteins S4 and S8.

With S4 and S12 plays an important role in translational accuracy. Functionally, located at the back of the 30S subunit body where it stabilizes the conformation of the head with respect to the body. This is Small ribosomal subunit protein uS5 from Laribacter hongkongensis (strain HLHK9).